The following is a 171-amino-acid chain: Co-chaperone protein HscB homolog (171 aa).

The 73-residue stretch at 2 to 74 (NHFELFGLPP…ISRAEYLLSQ (73 aa)) folds into the J domain.

It belongs to the HscB family. In terms of assembly, interacts with HscA and stimulates its ATPase activity.

In terms of biological role, co-chaperone involved in the maturation of iron-sulfur cluster-containing proteins. Seems to help targeting proteins to be folded toward HscA. This Vibrio vulnificus (strain CMCP6) protein is Co-chaperone protein HscB homolog.